The following is a 557-amino-acid chain: Potassium-transporting ATPase potassium-binding subunit (557 aa).

A run of 12 helical transmembrane segments spans residues 5 to 25, 63 to 83, 132 to 152, 170 to 190, 253 to 273, 283 to 303, 329 to 349, 356 to 376, 379 to 399, 416 to 436, 484 to 504, and 526 to 546; these read GFLL…PLGS, LCAI…MLLG, GLTV…FALI, LLRI…LFFI, FVQM…FGEV, LLWA…WAEV, VLVS…AVIA, ALGG…FGGV, GLYG…LMIG, LTAL…ALAM, LLAF…MAIA, and LFVG…FIPA.

It belongs to the KdpA family. As to quaternary structure, the system is composed of three essential subunits: KdpA, KdpB and KdpC.

It localises to the cell inner membrane. In terms of biological role, part of the high-affinity ATP-driven potassium transport (or Kdp) system, which catalyzes the hydrolysis of ATP coupled with the electrogenic transport of potassium into the cytoplasm. This subunit binds the periplasmic potassium ions and delivers the ions to the membrane domain of KdpB through an intramembrane tunnel. In Escherichia coli O17:K52:H18 (strain UMN026 / ExPEC), this protein is Potassium-transporting ATPase potassium-binding subunit.